Consider the following 256-residue polypeptide: uncharacterized protein (256 aa).

Disordered stretches follow at residues Met1 to Asp38 and Pro51 to Gln75.

This is an uncharacterized protein from Homo sapiens (Human).